The following is a 508-amino-acid chain: uncharacterized protein (508 aa).

The region spanning 3 to 163 (KAIAYMRFSS…LSWKKKRQDA (161 aa)) is the Resolvase/invertase-type recombinase catalytic domain. Ser11 acts as the O-(5'-phospho-DNA)-serine intermediate in catalysis. Residues 175–290 (PRWLSLDDKR…QEIRLAPFGI (116 aa)) constitute a DNA-binding region (recombinase).

This is an uncharacterized protein from Escherichia coli (strain K12).